The chain runs to 278 residues: Dermonecrotic toxin LspiSicTox-betaIE2ii (278 aa).

Residue His-5 is part of the active site. Glu-25 and Asp-27 together coordinate Mg(2+). His-41 serves as the catalytic Nucleophile. 2 disulfide bridges follow: Cys-45/Cys-51 and Cys-47/Cys-190. Asp-85 lines the Mg(2+) pocket.

Belongs to the arthropod phospholipase D family. Class II subfamily. The cofactor is Mg(2+). Expressed by the venom gland.

The protein resides in the secreted. It carries out the reaction an N-(acyl)-sphingosylphosphocholine = an N-(acyl)-sphingosyl-1,3-cyclic phosphate + choline. The catalysed reaction is an N-(acyl)-sphingosylphosphoethanolamine = an N-(acyl)-sphingosyl-1,3-cyclic phosphate + ethanolamine. It catalyses the reaction a 1-acyl-sn-glycero-3-phosphocholine = a 1-acyl-sn-glycero-2,3-cyclic phosphate + choline. The enzyme catalyses a 1-acyl-sn-glycero-3-phosphoethanolamine = a 1-acyl-sn-glycero-2,3-cyclic phosphate + ethanolamine. Its function is as follows. Dermonecrotic toxins cleave the phosphodiester linkage between the phosphate and headgroup of certain phospholipids (sphingolipid and lysolipid substrates), forming an alcohol (often choline) and a cyclic phosphate. This toxin acts on sphingomyelin (SM). It may also act on ceramide phosphoethanolamine (CPE), lysophosphatidylcholine (LPC) and lysophosphatidylethanolamine (LPE), but not on lysophosphatidylserine (LPS), and lysophosphatidylglycerol (LPG). It acts by transphosphatidylation, releasing exclusively cyclic phosphate products as second products. Induces dermonecrosis, hemolysis, increased vascular permeability, edema, inflammatory response, and platelet aggregation. This chain is Dermonecrotic toxin LspiSicTox-betaIE2ii, found in Loxosceles spinulosa (Recluse spider).